We begin with the raw amino-acid sequence, 426 residues long: Potassium channel subfamily K member 2 (426 aa).

The Cytoplasmic segment spans residues 1–61 (MLPSASRERP…TTINVMKWKT (61 aa)). 2 important for GNG4 binding and L-glutamate release in astrocytes regions span residues 17-38 (AAPD…LSFS) and 51-61 (DTTINVMKWKT). The chain crosses the membrane as a helical span at residues 62–82 (VSTIFLVVVLYLIIGATVFKA). N-linked (GlcNAc...) asparagine glycans are attached at residues Asn110 and Asn134. The pore-forming intramembrane region spans 144–170 (LGSSFFFAGTVITTIGFGNISPRTEGG). The K(+) site is built by Thr157, Ile158, Gly159, and Phe160. The segment at 157 to 162 (TIGFGN) is selectivity filter 1. Residues 172 to 192 (IFCIIYALLGIPLFGFLLAGV) traverse the membrane as a helical segment. Residues 193–223 (GDQLGTIFGKGIAKVEDTFIKWNVSQTKIRI) are Cytoplasmic-facing. A helical membrane pass occupies residues 224 to 244 (ISTIIFILFGCVLFVALPAII). The segment at residues 253-283 (ALDAIYFVVITLTTIGFGDYVAGGSDIEYLD) is an intramembrane region (pore-forming). K(+) is bound by residues Thr266, Ile267, Gly268, and Phe269. The tract at residues 266–271 (TIGFGD) is selectivity filter 2. Residues 288–308 (VVWFWILVGLAYFAAVLSMIG) traverse the membrane as a helical segment. Residues 309–426 (DWLRVISKKT…EEIAVIENIK (118 aa)) lie on the Cytoplasmic side of the membrane. Positions 313-326 (VISKKTKEEVGEFR) are interaction with AKAP5. The interval 337 to 385 (TAEFKETRRRLSVEIYDKFQRATSIKRKLSAELAGNHNQELTPCRRTLS) is essential for chloroform and halothane sensitivity. Ser348 is subject to Phosphoserine; by PKA.

The protein belongs to the two pore domain potassium channel (TC 1.A.1.8) family. Homodimer; disulfide-linked. Forms heterodimers with other 2-pore domain K(+) channel subunits, such as KCNK1, KCNK4, KCNK10 and KCNK18. Interacts with AKAP5; the channel is recruited to postsynaptic microdomains by AKAP5 where it can integrate neurotransmitter receptor signals. Part of a complex composed of AKAP5 and ADRB2. Upon AKAP5 binding, the channel is no longer sensitive to intracellular acidification, membrane stretch or arachidonic acid stimuli. Interacts with POPDC1; the interaction enhances KCNK2 surface expression and is inhibited by cAMP. Interacts (via N-terminus) with G-protein subunit GNG4 (via C-terminus); this interaction confers ion selectivity to L-glutamate and Cl(-) anions. Post-translationally, phosphorylation at Ser-348 controls the reversible conversion from a leak channel to a voltage-dependent channel. In terms of tissue distribution, detected in kidney, adrenal gland and brain where it is preferentially expressed in the amygdala but not found in thalamus, hypothalamus, hippocampus or substantia nigra.

Its subcellular location is the cell membrane. It localises to the endoplasmic reticulum membrane. The protein localises to the cell projection. It is found in the axon. The protein resides in the dendrite. Its subcellular location is the postsynaptic density membrane. It localises to the sarcolemma. The enzyme catalyses K(+)(in) = K(+)(out). It carries out the reaction L-glutamate(out) = L-glutamate(in). The catalysed reaction is chloride(in) = chloride(out). It catalyses the reaction Rb(+)(in) = Rb(+)(out). The enzyme catalyses Cs(+)(in) = Cs(+)(out). Its activity is regulated as follows. Activated by various stimuli including intracellular acidic pH, mechanical stretch and polyunsaturated fatty acids such as arachidonic acid. Activated by volatile anesthetics such as chloroform, halothane, and isoflurane. In terms of biological role, k(+) channel that conducts voltage-dependent outward rectifying currents upon membrane depolarization. Voltage sensing is coupled to K(+) electrochemical gradient in an 'ion flux gating' mode where outward but not inward ion flow opens the gate. Converts to voltage-independent 'leak' conductance mode upon stimulation by various stimuli including mechanical membrane stretch, acidic pH, heat and lipids. Reversibly converts between a voltage-insensitive K(+) 'leak' channel and a voltage-dependent outward rectifying K(+) channel in a phosphorylation-dependent manner. Homo- and heterodimerizes to form functional channels with distinct regulatory and gating properties. In trigeminal ganglia sensory neurons, the heterodimer of KCNK2/TREK-1 and KCNK18/TRESK inhibits neuronal firing and neurogenic inflammation by stabilizing the resting membrane potential at K(+) equilibrium potential as well as by regulating the threshold of action potentials and the spike frequency. At trigeminal A-beta afferent nerves, the heterodimer of KCNK2/TREK-1 and KCNK4/TRAAK is mostly coexpressed at nodes of Ranvier where it conducts voltage-independent mechanosensitive and thermosensitive currents, allowing rapid action potential repolarization, high speed and high frequence saltatory conduction on myelinated nerves to ensure prompt sensory responses. In hippocampal astrocytes, the heterodimer of KCNK2/TREK-1 and KCNK1/TWIK-1 allows passive K(+) conductance under basal conditions, but changes ion selectivity and becomes permeable to L-glutamate and Cl(-) ions upon binding to G-protein subunit GNG4 in stimulated astrocytes. Mediates rapid L-glutamate release in response to activation of G-protein-coupled receptors, such as F2R and CNR1. In hippocampal pyramidal neurons, the homodimer of KCNK2/TREK-1 contributes to gamma-aminobutyric acid (GABA) B-induced slow inhibitory postsynaptic potential. Associates with AKAP5 and Gs-protein-coupled receptor B2AR at postsynaptic dense bodies and converts to a leak channel no longer sensitive to stimulation by arachidonic acid, acidic pH or mechanical stress, nor inhibited by Gq-coupled receptors but still under the negative control of Gs-coupled receptors. Permeable to other monovalent cations such as Rb(+) and Cs(+). Does not display channel activity but reduces the channel activity of isoform 1 and isoform 2 and reduces cell surface expression of isoform 2. The sequence is that of Potassium channel subfamily K member 2 from Homo sapiens (Human).